Reading from the N-terminus, the 171-residue chain is Adenine phosphoribosyltransferase (171 aa).

It belongs to the purine/pyrimidine phosphoribosyltransferase family. In terms of assembly, homodimer.

It localises to the cytoplasm. It catalyses the reaction AMP + diphosphate = 5-phospho-alpha-D-ribose 1-diphosphate + adenine. It functions in the pathway purine metabolism; AMP biosynthesis via salvage pathway; AMP from adenine: step 1/1. Functionally, catalyzes a salvage reaction resulting in the formation of AMP, that is energically less costly than de novo synthesis. This is Adenine phosphoribosyltransferase from Prochlorococcus marinus (strain MIT 9515).